The sequence spans 310 residues: Cell division protein FtsQ (310 aa).

Residues 1–57 (MSEPENTAEDKDAEAAISADAVESETTADGGENPAEGESAEGPRMRARRERMERREA) are disordered. At 1 to 95 (MSEPENTAED…AGRGKVQGLQ (95 aa)) the chain is on the cytoplasmic side. The chain crosses the membrane as a helical span at residues 96-116 (TLLLVVLLALIAVGLGSILYF). At 117 to 310 (TPLMSVRQTV…VSSPDLPTVK (194 aa)) the chain is on the extracellular side. Positions 120-188 (MSVRQTVVTG…STLRVTIVER (69 aa)) constitute a POTRA domain.

Belongs to the FtsQ/DivIB family. FtsQ subfamily.

It is found in the cell membrane. Its function is as follows. Essential cell division protein. The protein is Cell division protein FtsQ of Mycobacteroides abscessus (strain ATCC 19977 / DSM 44196 / CCUG 20993 / CIP 104536 / JCM 13569 / NCTC 13031 / TMC 1543 / L948) (Mycobacterium abscessus).